The following is a 492-amino-acid chain: MDTTKQNVKTLKNFINGKWVDAKTETFENVYNPATGDVLARVPHSTSEDVADAVTAAKEAFKIWQKVSIPKRAKILFKYQQLLVEHQEELGRIVTEENGKSLDEAVAEVGRGIENVEFAAGVPTLMMGDSLSSVATDVEATNYRYPIGVVGGITPFNFPMMVPCWMFPMAVATGNTFILKPSEKTPLTSQRLVELFQEAGLPDGVLNIVNGAVDVVNGILDHPDIKAISFVGSERVGEYVYKRGSDHLKRVQALTGAKNHTIVLADADLDAAVKGIISSSFGSAGERCMATSVLVLQDEIADKFMAKFTQAAKDIKIGNGLDKGVFLGPVIRKENQERTLNYIQTGVKEGAKLVLDGSAEAKKHDGYFVGPTIFEDVKTDMTIWHDEMFAPVLSVIRAKDLPQAVAIANTSELANGACLFTDSAASIRYFRENIDAGMLGINLGVPAPIAVFPFSGWKHSFFGTLHANGKDSVDFYTHKKVVTARYDQRRFK.

NAD(+)-binding residues include Phe-156, Lys-180, Glu-183, Lys-184, Ser-233, and Thr-255. Residue Cys-288 is the Nucleophile of the active site. Glu-387 provides a ligand contact to NAD(+).

The protein belongs to the aldehyde dehydrogenase family. IolA subfamily. Homotetramer.

The catalysed reaction is 3-oxopropanoate + NAD(+) + CoA + H2O = hydrogencarbonate + acetyl-CoA + NADH + H(+). The enzyme catalyses 2-methyl-3-oxopropanoate + NAD(+) + CoA + H2O = propanoyl-CoA + hydrogencarbonate + NADH + H(+). It participates in polyol metabolism; myo-inositol degradation into acetyl-CoA; acetyl-CoA from myo-inositol: step 7/7. Catalyzes the oxidation of malonate semialdehyde (MSA) and methylmalonate semialdehyde (MMSA) into acetyl-CoA and propanoyl-CoA, respectively. Is involved in a myo-inositol catabolic pathway. Bicarbonate, and not CO2, is the end-product of the enzymatic reaction. The polypeptide is Malonate-semialdehyde dehydrogenase (Lacticaseibacillus casei (Lactobacillus casei)).